The following is a 503-amino-acid chain: Probable cytosol aminopeptidase (503 aa).

Mn(2+)-binding residues include K274 and D279. K286 is an active-site residue. Positions 297, 356, and 358 each coordinate Mn(2+). Residue R360 is part of the active site.

It belongs to the peptidase M17 family. Mn(2+) serves as cofactor.

The protein resides in the cytoplasm. It carries out the reaction Release of an N-terminal amino acid, Xaa-|-Yaa-, in which Xaa is preferably Leu, but may be other amino acids including Pro although not Arg or Lys, and Yaa may be Pro. Amino acid amides and methyl esters are also readily hydrolyzed, but rates on arylamides are exceedingly low.. The enzyme catalyses Release of an N-terminal amino acid, preferentially leucine, but not glutamic or aspartic acids.. Functionally, presumably involved in the processing and regular turnover of intracellular proteins. Catalyzes the removal of unsubstituted N-terminal amino acids from various peptides. This is Probable cytosol aminopeptidase from Burkholderia ambifaria (strain ATCC BAA-244 / DSM 16087 / CCUG 44356 / LMG 19182 / AMMD) (Burkholderia cepacia (strain AMMD)).